A 474-amino-acid polypeptide reads, in one-letter code: Adenosylhomocysteinase (474 aa).

Positions 61, 136, and 196 each coordinate substrate. 197–199 (TTT) is an NAD(+) binding site. K226 and D230 together coordinate substrate. NAD(+) is bound by residues N231, 260–265 (GYGDVG), E283, N318, 339–341 (IGH), and N384.

Belongs to the adenosylhomocysteinase family. The cofactor is NAD(+).

The protein localises to the cytoplasm. The catalysed reaction is S-adenosyl-L-homocysteine + H2O = L-homocysteine + adenosine. Its pathway is amino-acid biosynthesis; L-homocysteine biosynthesis; L-homocysteine from S-adenosyl-L-homocysteine: step 1/1. Functionally, may play a key role in the regulation of the intracellular concentration of adenosylhomocysteine. The protein is Adenosylhomocysteinase of Ralstonia pickettii (strain 12J).